We begin with the raw amino-acid sequence, 156 residues long: Cytochrome c-type biogenesis protein CcmE 1 (156 aa).

Topologically, residues 1-8 are cytoplasmic; it reads MNATRKQR. A helical; Signal-anchor for type II membrane protein transmembrane segment spans residues 9–29; that stretch reads LWLVIGVLAAAALAVTLIVFA. The Periplasmic segment spans residues 30–156; it reads LQRNMSYLFT…ATVAPLTAPR (127 aa). Heme is bound by residues His-123 and Tyr-127.

It belongs to the CcmE/CycJ family.

Its subcellular location is the cell inner membrane. Its function is as follows. Heme chaperone required for the biogenesis of c-type cytochromes. Transiently binds heme delivered by CcmC and transfers the heme to apo-cytochromes in a process facilitated by CcmF and CcmH. This is Cytochrome c-type biogenesis protein CcmE 1 from Xanthomonas axonopodis pv. citri (strain 306).